A 227-amino-acid chain; its full sequence is Cytochrome c oxidase subunit 2 (227 aa).

Residues M1 to S14 are Mitochondrial intermembrane-facing. Residues P15–T45 traverse the membrane as a helical segment. Over L46–Q59 the chain is Mitochondrial matrix. Residues E60–T87 traverse the membrane as a helical segment. Residues D88–L227 lie on the Mitochondrial intermembrane side of the membrane. Residues H161, C196, E198, C200, H204, and M207 each contribute to the Cu cation site. A Mg(2+)-binding site is contributed by E198.

Belongs to the cytochrome c oxidase subunit 2 family. In terms of assembly, component of the cytochrome c oxidase (complex IV, CIV), a multisubunit enzyme composed of 14 subunits. The complex is composed of a catalytic core of 3 subunits MT-CO1, MT-CO2 and MT-CO3, encoded in the mitochondrial DNA, and 11 supernumerary subunits COX4I, COX5A, COX5B, COX6A, COX6B, COX6C, COX7A, COX7B, COX7C, COX8 and NDUFA4, which are encoded in the nuclear genome. The complex exists as a monomer or a dimer and forms supercomplexes (SCs) in the inner mitochondrial membrane with NADH-ubiquinone oxidoreductase (complex I, CI) and ubiquinol-cytochrome c oxidoreductase (cytochrome b-c1 complex, complex III, CIII), resulting in different assemblies (supercomplex SCI(1)III(2)IV(1) and megacomplex MCI(2)III(2)IV(2)). Found in a complex with TMEM177, COA6, COX18, COX20, SCO1 and SCO2. Interacts with TMEM177 in a COX20-dependent manner. Interacts with COX20. Interacts with COX16. Cu cation is required as a cofactor.

The protein localises to the mitochondrion inner membrane. The catalysed reaction is 4 Fe(II)-[cytochrome c] + O2 + 8 H(+)(in) = 4 Fe(III)-[cytochrome c] + 2 H2O + 4 H(+)(out). Component of the cytochrome c oxidase, the last enzyme in the mitochondrial electron transport chain which drives oxidative phosphorylation. The respiratory chain contains 3 multisubunit complexes succinate dehydrogenase (complex II, CII), ubiquinol-cytochrome c oxidoreductase (cytochrome b-c1 complex, complex III, CIII) and cytochrome c oxidase (complex IV, CIV), that cooperate to transfer electrons derived from NADH and succinate to molecular oxygen, creating an electrochemical gradient over the inner membrane that drives transmembrane transport and the ATP synthase. Cytochrome c oxidase is the component of the respiratory chain that catalyzes the reduction of oxygen to water. Electrons originating from reduced cytochrome c in the intermembrane space (IMS) are transferred via the dinuclear copper A center (CU(A)) of subunit 2 and heme A of subunit 1 to the active site in subunit 1, a binuclear center (BNC) formed by heme A3 and copper B (CU(B)). The BNC reduces molecular oxygen to 2 water molecules using 4 electrons from cytochrome c in the IMS and 4 protons from the mitochondrial matrix. This chain is Cytochrome c oxidase subunit 2 (MT-CO2), found in Pongo pygmaeus (Bornean orangutan).